Here is a 215-residue protein sequence, read N- to C-terminus: Cytochrome b6 (215 aa).

A helical membrane pass occupies residues 32 to 52 (IFYCLGGITFTSFVIQVASGF). C35 contacts heme c. The heme b site is built by H86 and H100. Helical transmembrane passes span 90 to 110 (ASMMVLMMILHIFRVYLTGGF), 116 to 136 (LTWVTGVILSVLTVSFGVTGY), and 186 to 206 (LHTFVLPLLTAVFMLMHFLMI). The heme b site is built by H187 and H202.

This sequence belongs to the cytochrome b family. PetB subfamily. The 4 large subunits of the cytochrome b6-f complex are cytochrome b6, subunit IV (17 kDa polypeptide, PetD), cytochrome f and the Rieske protein, while the 4 small subunits are PetG, PetL, PetM and PetN. The complex functions as a dimer. Requires heme b as cofactor. It depends on heme c as a cofactor.

It localises to the plastid. It is found in the chloroplast thylakoid membrane. Functionally, component of the cytochrome b6-f complex, which mediates electron transfer between photosystem II (PSII) and photosystem I (PSI), cyclic electron flow around PSI, and state transitions. In Chaetosphaeridium globosum (Charophycean green alga), this protein is Cytochrome b6.